Here is a 38-residue protein sequence, read N- to C-terminus: Antifungal protein 5 (38 aa).

It belongs to the plant LTP family.

Its function is as follows. Possesses potent antifungal activity against F.graminearum but not P.infestans. This chain is Antifungal protein 5, found in Malva parviflora (Little mallow).